The chain runs to 151 residues: UPF0336 protein Franean1_6066 (151 aa).

The 120-residue stretch at Val-8–Phe-127 folds into the MaoC-like domain.

This sequence belongs to the UPF0336 family.

In Parafrankia sp. (strain EAN1pec), this protein is UPF0336 protein Franean1_6066.